The sequence spans 319 residues: Formimidoylglutamase (319 aa).

Mn(2+)-binding residues include H131, D154, H156, D158, C248, and D250.

Belongs to the arginase family. It depends on Mn(2+) as a cofactor.

It carries out the reaction N-formimidoyl-L-glutamate + H2O = formamide + L-glutamate. Its pathway is amino-acid degradation; L-histidine degradation into L-glutamate; L-glutamate from N-formimidoyl-L-glutamate (hydrolase route): step 1/1. Functionally, catalyzes the conversion of N-formimidoyl-L-glutamate to L-glutamate and formamide. The chain is Formimidoylglutamase from Legionella pneumophila (strain Paris).